The following is a 59-amino-acid chain: Large ribosomal subunit protein bL32 (59 aa).

The disordered stretch occupies residues 1–59; the sequence is MAVQQNKKSPSKRGMHRSHDALTAPALSVDSTTGEVHRPHHISPNGMYRGRKVVKVKGE. The span at 49–59 shows a compositional bias: basic residues; that stretch reads RGRKVVKVKGE.

It belongs to the bacterial ribosomal protein bL32 family.

This is Large ribosomal subunit protein bL32 (rpmF) from Neisseria meningitidis serogroup A / serotype 4A (strain DSM 15465 / Z2491).